The primary structure comprises 441 residues: uncharacterized protein (441 aa).

Position 217 to 224 (217 to 224 (GETGTGKT)) interacts with ATP.

It belongs to the GSP E family.

This is an uncharacterized protein from Bacillus anthracis.